The following is a 605-amino-acid chain: Aspartate--tRNA(Asp/Asn) ligase (605 aa).

Glu-176 provides a ligand contact to L-aspartate. Positions 200–203 (QQFK) are aspartate. The L-aspartate site is built by Arg-222 and His-452. Position 222–224 (222–224 (RDE)) interacts with ATP. Residue Glu-490 coordinates ATP. Residue Arg-497 coordinates L-aspartate. An ATP-binding site is contributed by 542–545 (GIDR).

The protein belongs to the class-II aminoacyl-tRNA synthetase family. Type 1 subfamily. Homodimer.

It is found in the cytoplasm. The enzyme catalyses tRNA(Asx) + L-aspartate + ATP = L-aspartyl-tRNA(Asx) + AMP + diphosphate. Functionally, aspartyl-tRNA synthetase with relaxed tRNA specificity since it is able to aspartylate not only its cognate tRNA(Asp) but also tRNA(Asn). Reaction proceeds in two steps: L-aspartate is first activated by ATP to form Asp-AMP and then transferred to the acceptor end of tRNA(Asp/Asn). The chain is Aspartate--tRNA(Asp/Asn) ligase from Rickettsia prowazekii (strain Madrid E).